Here is a 358-residue protein sequence, read N- to C-terminus: Cytochrome c peroxidase, mitochondrial (358 aa).

The N-terminal 38 residues, 1–38, are a transit peptide targeting the mitochondrion; sequence MAASRTATRTLRALRTSTRPALTAAPRAAFRQGGRRLY. His-119 acts as the Proton acceptor in catalysis. Residues 192 to 214 are disordered; sequence PYRPGRQDRDAAGCTPDGRLPDA. Residue His-242 coordinates heme b. Trp-258 (tryptophan radical intermediate) is an active-site residue.

This sequence belongs to the peroxidase family. Cytochrome c peroxidase subfamily. As to quaternary structure, forms a one-to-one complex with cytochrome c. The cofactor is heme b.

Its subcellular location is the mitochondrion matrix. It is found in the mitochondrion intermembrane space. The catalysed reaction is 2 Fe(II)-[cytochrome c] + H2O2 + 2 H(+) = 2 Fe(III)-[cytochrome c] + 2 H2O. Its function is as follows. Destroys radicals which are normally produced within the cells and which are toxic to biological systems. The chain is Cytochrome c peroxidase, mitochondrial (ccp-1) from Neurospora crassa (strain ATCC 24698 / 74-OR23-1A / CBS 708.71 / DSM 1257 / FGSC 987).